We begin with the raw amino-acid sequence, 149 residues long: MAEAPHTLKFERLRKRPDFLLAAKAPALSRGAVFIQMRQRTDDDPTVRVGFTATKKIGGAVERNRAKRRLREAARLVLPLHARPSHDYVFIARGGTGTREWARLLDDVKTALISLAADLDRGGTKVSRRSNGALHDAAPSSQPDPTVSG.

A disordered region spans residues 123 to 149 (GTKVSRRSNGALHDAAPSSQPDPTVSG). Residues 139-149 (PSSQPDPTVSG) show a composition bias toward polar residues.

This sequence belongs to the RnpA family. As to quaternary structure, consists of a catalytic RNA component (M1 or rnpB) and a protein subunit.

The catalysed reaction is Endonucleolytic cleavage of RNA, removing 5'-extranucleotides from tRNA precursor.. Functionally, RNaseP catalyzes the removal of the 5'-leader sequence from pre-tRNA to produce the mature 5'-terminus. It can also cleave other RNA substrates such as 4.5S RNA. The protein component plays an auxiliary but essential role in vivo by binding to the 5'-leader sequence and broadening the substrate specificity of the ribozyme. The sequence is that of Ribonuclease P protein component from Caulobacter vibrioides (strain ATCC 19089 / CIP 103742 / CB 15) (Caulobacter crescentus).